The chain runs to 140 residues: Large ribosomal subunit protein bL17 (140 aa).

Residues 121 to 140 are disordered; the sequence is AAKGLDSGPTAEANDDDSEE.

The protein belongs to the bacterial ribosomal protein bL17 family. Part of the 50S ribosomal subunit. Contacts protein L32.

The polypeptide is Large ribosomal subunit protein bL17 (Rhodospirillum rubrum (strain ATCC 11170 / ATH 1.1.1 / DSM 467 / LMG 4362 / NCIMB 8255 / S1)).